Reading from the N-terminus, the 725-residue chain is Polyribonucleotide nucleotidyltransferase (725 aa).

Residues aspartate 487 and aspartate 493 each contribute to the Mg(2+) site. One can recognise a KH domain in the interval 554–613 (PRIETMQIPTDKIREVIGTGGKVIREIVEKTGAKIDIQDTGVVKIASSDGKAIKAAYNWI). The S1 motif domain maps to 623–691 (GMIYDGTVVK…ERGKIRLSMK (69 aa)). The segment at 699 to 725 (EDLTEKLKAEREADRNRERQARQSAGE) is disordered. Positions 701–719 (LTEKLKAEREADRNRERQA) are enriched in basic and acidic residues.

It belongs to the polyribonucleotide nucleotidyltransferase family. Mg(2+) serves as cofactor.

Its subcellular location is the cytoplasm. The enzyme catalyses RNA(n+1) + phosphate = RNA(n) + a ribonucleoside 5'-diphosphate. Involved in mRNA degradation. Catalyzes the phosphorolysis of single-stranded polyribonucleotides processively in the 3'- to 5'-direction. In Methylobacterium sp. (strain 4-46), this protein is Polyribonucleotide nucleotidyltransferase.